Consider the following 259-residue polypeptide: UPF0246 protein ABBFA_001173 (259 aa).

This sequence belongs to the UPF0246 family.

This is UPF0246 protein ABBFA_001173 from Acinetobacter baumannii (strain AB307-0294).